Consider the following 306-residue polypeptide: Ribonuclease HIII (306 aa).

Positions 87–302 (WSVVGSDEVG…TKKAEALAKK (216 aa)) constitute an RNase H type-2 domain. A divalent metal cation is bound by residues aspartate 93, glutamate 94, and aspartate 196.

It belongs to the RNase HII family. RnhC subfamily. Mn(2+) serves as cofactor. Requires Mg(2+) as cofactor.

It is found in the cytoplasm. It carries out the reaction Endonucleolytic cleavage to 5'-phosphomonoester.. Functionally, endonuclease that specifically degrades the RNA of RNA-DNA hybrids. This chain is Ribonuclease HIII, found in Exiguobacterium sibiricum (strain DSM 17290 / CCUG 55495 / CIP 109462 / JCM 13490 / 255-15).